Reading from the N-terminus, the 116-residue chain is Large ribosomal subunit protein uL18 (116 aa).

It belongs to the universal ribosomal protein uL18 family. As to quaternary structure, part of the 50S ribosomal subunit; part of the 5S rRNA/L5/L18/L25 subcomplex. Contacts the 5S and 23S rRNAs.

In terms of biological role, this is one of the proteins that bind and probably mediate the attachment of the 5S RNA into the large ribosomal subunit, where it forms part of the central protuberance. The sequence is that of Large ribosomal subunit protein uL18 from Mycoplasma mycoides subsp. mycoides SC (strain CCUG 32753 / NCTC 10114 / PG1).